The sequence spans 573 residues: MTQISRQQYADLYGPTIGDKIRLGDSDLYVEIEKDLRATYGDELQYGGGKTLRDGMGSENFLTQEAGCLDLVITNVTVIDAIQGVVKADVGIRNGRIVGLGKAGNPSTKDGVTRGLVTGASTDAISGEHLILTAGGMDTHVHYIAPQQVEAALSNGITTLWGGGIGPVDGTNGVTTTNGPWNLEMMLRSIEGLPINFGIQGKGNSTGIAPLIEQLEAGAAGFKVHEDYGATPATIRACLSVADEYDVSVAVHTDTLNESGYVEDTIAAFDGRSVHTYHSEGAGGGHAPDLLKVVGQNNILPSSTNPTLPCGKNSVAELFDMIMVCHNLNPKIPSDVAFAESRVRAETIVAESVLHDMGAISMIGSDSQAMGRLGETFLRAIQTADAMKKARGPLPEDAPGNDNFRVLRYIAKVTINPALTAGVGDVIGSIESGKFADLVLWEPAFFGVKPKLVLKGGLVAWANMGDPNASLPTPQPMYYRPMFAAYGSALQKTSITFVSRAAYDKGVADRFGLQRLVMPVSGTRVIGKAHMVRNSYLPNIEVDPQTFAVKVDGVHATVKPPQSISLNQLYFFS.

A Urease domain is found at 135 to 573 (GGMDTHVHYI…ISLNQLYFFS (439 aa)). Residues histidine 140, histidine 142, and lysine 223 each coordinate Ni(2+). The residue at position 223 (lysine 223) is an N6-carboxylysine. Residue histidine 225 coordinates substrate. Ni(2+)-binding residues include histidine 252 and histidine 278. Histidine 326 (proton donor) is an active-site residue. Aspartate 366 lines the Ni(2+) pocket.

It belongs to the metallo-dependent hydrolases superfamily. Urease alpha subunit family. As to quaternary structure, heterotrimer of UreA (gamma), UreB (beta) and UreC (alpha) subunits. Three heterotrimers associate to form the active enzyme. The cofactor is Ni cation. Post-translationally, carboxylation allows a single lysine to coordinate two nickel ions.

Its subcellular location is the cytoplasm. The catalysed reaction is urea + 2 H2O + H(+) = hydrogencarbonate + 2 NH4(+). It functions in the pathway nitrogen metabolism; urea degradation; CO(2) and NH(3) from urea (urease route): step 1/1. Its function is as follows. Disrupting the ure2 operon has no effect on urease activity or pathogen survival in BALB/c mice when administered orally. The chain is Urease subunit alpha 2 from Brucella abortus (strain 2308).